The primary structure comprises 436 residues: T-box transcription factor TBX6 (436 aa).

The segment at residues 100–273 (LWKEFSAVGT…ANPFAKGFRE (174 aa)) is a DNA-binding region (T-box). Basic and acidic residues predominate over residues 274-284 (NGRNCKRERDA). Disordered regions lie at residues 274–344 (NGRN…CGGP) and 360–383 (PSHL…APYS). The segment covering 332 to 344 (EAASASAPPCGGP) has biased composition (low complexity).

It localises to the nucleus. Functionally, T-box transcription factor that plays an essential role in the determination of the fate of axial stem cells: neural vs mesodermal. Acts in part by down-regulating, a specific enhancer (N1) of SOX2, to inhibit neural development. Seems to play also an essential role in left/right axis determination and acts through effects on Notch signaling around the node as well as through an effect on the morphology and motility of the nodal cilia. This is T-box transcription factor TBX6 (Tbx6) from Mus musculus (Mouse).